The following is a 751-amino-acid chain: Semaphorin-3C (751 aa).

A signal peptide spans 1-21 (MAVLALHAVFGIFIYFSSVKG). In terms of domain architecture, Sema spans 28-511 (RVFLTFNELQ…SEEGVTQVPL (484 aa)). Residue Asn-81 is glycosylated (N-linked (GlcNAc...) asparagine). Cys-101 and Cys-112 are disulfide-bonded. N-linked (GlcNAc...) asparagine glycosylation is present at Asn-123. 3 disulfide bridges follow: Cys-130–Cys-139, Cys-266–Cys-378, and Cys-290–Cys-338. A glycan (N-linked (GlcNAc...) asparagine) is linked at Asn-268. Residue Asn-465 is glycosylated (N-linked (GlcNAc...) asparagine). A disulfide bond links Cys-514 and Cys-532. The Ig-like C2-type domain maps to 571-655 (AYRNAAETVQ…TENNFKQTLA (85 aa)). Asn-585 and Asn-586 each carry an N-linked (GlcNAc...) asparagine glycan. An intrachain disulfide couples Cys-643 to Cys-709. Positions 712-731 (SRQQGQRREEPQKMRGDYSK) are enriched in basic and acidic residues. Positions 712–751 (SRQQGQRREEPQKMRGDYSKLKALINSRKSRNRRNQLPAS) are disordered.

Belongs to the semaphorin family. In terms of tissue distribution, collapsin-1, -2, -3, and -5 bind to overlapping but distinct axon tracts.

It is found in the secreted. In terms of biological role, induces the collapse and paralysis of neuronal growth cones. Could potentially act as repulsive cues toward specific neuronal populations. Binds to neuropilin. In Gallus gallus (Chicken), this protein is Semaphorin-3C (SEMA3C).